The sequence spans 1044 residues: Isoleucine--tRNA ligase (1044 aa).

The short motif at 48–58 (PFATGLPHFGH) is the 'HIGH' region element. The short motif at 594 to 598 (KMSKS) is the 'KMSKS' region element. Lysine 597 lines the ATP pocket.

This sequence belongs to the class-I aminoacyl-tRNA synthetase family. IleS type 2 subfamily. As to quaternary structure, monomer. Requires Zn(2+) as cofactor.

It localises to the cytoplasm. It carries out the reaction tRNA(Ile) + L-isoleucine + ATP = L-isoleucyl-tRNA(Ile) + AMP + diphosphate. Its function is as follows. Catalyzes the attachment of isoleucine to tRNA(Ile). As IleRS can inadvertently accommodate and process structurally similar amino acids such as valine, to avoid such errors it has two additional distinct tRNA(Ile)-dependent editing activities. One activity is designated as 'pretransfer' editing and involves the hydrolysis of activated Val-AMP. The other activity is designated 'posttransfer' editing and involves deacylation of mischarged Val-tRNA(Ile). The polypeptide is Isoleucine--tRNA ligase (Borrelia hermsii (strain HS1 / DAH)).